Consider the following 380-residue polypeptide: Dynactin subunit 2 (380 aa).

The tract at residues 1-40 is disordered; the sequence is MADPKFQNLPGIAYDQPDVYETPDDPETDTSDYYEEEPEN. Residues 21–40 are compositionally biased toward acidic residues; it reads ETPDDPETDTSDYYEEEPEN. 2 coiled-coil regions span residues 100 to 135 and 353 to 377; these read VQKC…QSYD and ETFA…TAIS.

The protein belongs to the dynactin subunit 2 family. In terms of assembly, subunit of dynactin, a multiprotein complex associated with dynein.

It localises to the cytoplasm. It is found in the cytoskeleton. Its subcellular location is the membrane. In terms of biological role, modulates cytoplasmic dynein binding to an organelle, and plays a role in prometaphase chromosome alignment and spindle organization during mitosis. May play a role in synapse formation during brain development. The chain is Dynactin subunit 2 from Drosophila pseudoobscura pseudoobscura (Fruit fly).